Here is a 450-residue protein sequence, read N- to C-terminus: Tubulin alpha chain (450 aa).

Residue glutamine 11 coordinates GTP. The residue at position 40 (lysine 40) is an N6-acetyllysine. The GTP site is built by glutamate 71, serine 140, glycine 144, threonine 145, threonine 179, asparagine 206, and asparagine 228. Glutamate 71 serves as a coordination point for Mg(2+). Glutamate 254 is an active-site residue. The tract at residues aspartate 431–tyrosine 450 is disordered.

The protein belongs to the tubulin family. Dimer of alpha and beta chains. A typical microtubule is a hollow water-filled tube with an outer diameter of 25 nm and an inner diameter of 15 nM. Alpha-beta heterodimers associate head-to-tail to form protofilaments running lengthwise along the microtubule wall with the beta-tubulin subunit facing the microtubule plus end conferring a structural polarity. Microtubules usually have 13 protofilaments but different protofilament numbers can be found in some organisms and specialized cells. Requires Mg(2+) as cofactor. Post-translationally, some glutamate residues at the C-terminus are polyglycylated, resulting in polyglycine chains on the gamma-carboxyl group. Glycylation is mainly limited to tubulin incorporated into axonemes (cilia and flagella) whereas glutamylation is prevalent in neuronal cells, centrioles, axonemes, and the mitotic spindle. Both modifications can coexist on the same protein on adjacent residues, and lowering polyglycylation levels increases polyglutamylation, and reciprocally. The precise function of polyglycylation is still unclear. Some glutamate residues at the C-terminus are polyglutamylated, resulting in polyglutamate chains on the gamma-carboxyl group. Polyglutamylation plays a key role in microtubule severing by spastin (SPAST). SPAST preferentially recognizes and acts on microtubules decorated with short polyglutamate tails: severing activity by SPAST increases as the number of glutamates per tubulin rises from one to eight, but decreases beyond this glutamylation threshold. In terms of processing, acetylation of alpha chains at Lys-40 is located inside the microtubule lumen. This modification has been correlated with increased microtubule stability, intracellular transport and ciliary assembly. Post-translationally, undergoes a tyrosination/detyrosination cycle, the cyclic removal and re-addition of a C-terminal tyrosine residue by the enzymes tubulin tyrosine carboxypeptidase (MATCAP, VASH1 or VASH2) and tubulin tyrosine ligase (TTL), respectively. Tyrosination promotes microtubule interaction with CAP-Gly microtubule plus-end tracking proteins. Tyrosinated tubulins regulate the initiation of dynein-driven motility. In terms of processing, detyrosination is involved in metaphase plate congression by guiding chromosomes during mitosis. Detyrosination increases microtubules-dependent mechanotransduction in dystrophic cardiac and skeletal muscle. In cardiomyocytes, detyrosinated microtubules are required to resist to contractile compression during contraction.

It localises to the cytoplasm. The protein localises to the cytoskeleton. It carries out the reaction GTP + H2O = GDP + phosphate + H(+). Its function is as follows. Tubulin is the major constituent of microtubules, a cylinder consisting of laterally associated linear protofilaments composed of alpha- and beta-tubulin heterodimers. Microtubules grow by the addition of GTP-tubulin dimers to the microtubule end, where a stabilizing cap forms. Below the cap, tubulin dimers are in GDP-bound state, owing to GTPase activity of alpha-tubulin. The polypeptide is Tubulin alpha chain (Oncorhynchus keta (Chum salmon)).